Reading from the N-terminus, the 535-residue chain is MMQHSSSVTQEPTNPFGFVSQVGSFVFNNSCSRVSKSNFTLDSYSNLLSNYLYFDCNVKKDSLNHKNKPKASPLLSLSISNKSASSFSRVLFQFNKAIRFHCEKIPLGFASVGVNCGESNGVREEGSVVENEGIPDNGVESEPPKKVLILMSDTGGGHRASAEAIRSAFNEEFGDKYQVFITDLWTEHTPWPFNQLPRSYNFLVKHGSLWRMTYYATAPRLVHQTNFAATSTFIAREVAKGLMKYQPDIIISVHPLMQHVPLRILRSKGLLKKIIFTTVITDLSTCHPTWFHKLVTRCYCPSEEVAKRALRAGLKPYQLKVYGLPVRPSFVKPVPPKVELRKELGMEEHLPAVLLMGGGEGMGPIEATARALGDALYDEIHGEPIGQVLVICGRNKKLFNRLTSVQWKIPVQVKGFVTKMEECMGACDCIITKAGPGTIAEAVIRGLPIILNDYIAGQEAGNVPYVIENGCGKFSKSPKKIANIVAQWFGPRQDELRIMSQNALRLARPDAVFKIVHDMHELVRQRNFEPQCCPA.

A chloroplast-targeting transit peptide spans 1–113 (MMQHSSSVTQ…KIPLGFASVG (113 aa)).

Belongs to the glycosyltransferase 28 family.

It localises to the plastid. The protein localises to the chloroplast membrane. It catalyses the reaction a 1,2-diacyl-sn-glycerol + UDP-alpha-D-galactose = a 1,2-diacyl-3-O-(beta-D-galactosyl)-sn-glycerol + UDP + H(+). Its function is as follows. Involved in the synthesis of the major structural component of photosynthetic membranes. This is Probable monogalactosyldiacylglycerol synthase, chloroplastic (MGD A) from Nicotiana tabacum (Common tobacco).